Consider the following 202-residue polypeptide: 3-isopropylmalate dehydratase small subunit 1 (202 aa).

Belongs to the LeuD family. LeuD type 1 subfamily. Heterodimer of LeuC and LeuD.

It catalyses the reaction (2R,3S)-3-isopropylmalate = (2S)-2-isopropylmalate. It functions in the pathway amino-acid biosynthesis; L-leucine biosynthesis; L-leucine from 3-methyl-2-oxobutanoate: step 2/4. Its function is as follows. Catalyzes the isomerization between 2-isopropylmalate and 3-isopropylmalate, via the formation of 2-isopropylmaleate. In Mannheimia succiniciproducens (strain KCTC 0769BP / MBEL55E), this protein is 3-isopropylmalate dehydratase small subunit 1.